The primary structure comprises 225 residues: C-reactive protein (225 aa).

Positions 1–19 (MAKLLLYFLLLTSLSDVFG) are cleaved as a signal peptide. The 202-residue stretch at 24–225 (SKKTFVFPKE…EVFIKPQLWP (202 aa)) folds into the Pentraxin (PTX) domain. A disulfide bridge links Cys-55 with Cys-116. Positions 80, 158, 159, and 169 each coordinate Ca(2+).

Belongs to the pentraxin family. As to quaternary structure, homopentamer. Pentraxin (or pentaxin) have a discoid arrangement of 5 non-covalently bound subunits. Interacts with FCN1; may regulate monocyte activation by FCN1. Requires Ca(2+) as cofactor. As to expression, found in plasma.

It localises to the secreted. In terms of biological role, displays several functions associated with host defense: it promotes agglutination, bacterial capsular swelling, phagocytosis and complement fixation through its calcium-dependent binding to phosphorylcholine. Can interact with DNA and histones and may scavenge nuclear material released from damaged circulating cells. In Cavia porcellus (Guinea pig), this protein is C-reactive protein (CRP).